A 495-amino-acid chain; its full sequence is Cardiolipin synthase A (495 aa).

2 helical membrane-spanning segments follow: residues 9 to 29 (IEVLFVIIKWILLLGYWWLIT) and 46 to 66 (MAWLLIIYVVPFIGAIIYLLL). 2 consecutive PLD phosphodiesterase domains span residues 227 to 254 (MDLRQHRKMILIDNYIGYTGSMNMIDPK) and 408 to 435 (EGGLLHTKSILVDDQLSLVGTVNLDMRS). Residues histidine 232, lysine 234, aspartate 239, histidine 413, lysine 415, and aspartate 420 contribute to the active site.

Belongs to the phospholipase D family. Cardiolipin synthase subfamily. ClsA sub-subfamily.

Its subcellular location is the cell membrane. The enzyme catalyses 2 a 1,2-diacyl-sn-glycero-3-phospho-(1'-sn-glycerol) = a cardiolipin + glycerol. In terms of biological role, catalyzes the reversible phosphatidyl group transfer from one phosphatidylglycerol molecule to another to form cardiolipin (CL) (diphosphatidylglycerol) and glycerol. The chain is Cardiolipin synthase A from Wigglesworthia glossinidia brevipalpis.